A 1141-amino-acid polypeptide reads, in one-letter code: Eukaryotic translation initiation factor 3 subunit A (1141 aa).

Positions 319 to 501 (LQRMAAHVLL…NSIYFGTDLT (183 aa)) constitute a PCI domain. Basic and acidic residues-rich tracts occupy residues 588–623 (QNNAREEEEARRQEEESRKAKLAEQKRLEQEQEERE) and 829–899 (AAEE…RGGD). Disordered stretches follow at residues 588-631 (QNNA…QNEI) and 829-1141 (AAEE…VKRR). Position 908 is a phosphoserine (Ser-908). Basic and acidic residues-rich tracts occupy residues 920–976 (ERND…EPDT), 990–1051 (SRDD…EPQR), 1059–1087 (DAPRHADRENRRPAGERRDRDVRETRGDQ), and 1110–1131 (TREEKPAAKRDQAQEKENKAGD).

Belongs to the eIF-3 subunit A family. In terms of assembly, component of the eukaryotic translation initiation factor 3 (eIF-3) complex. The eIF-3 complex interacts with pix.

Its subcellular location is the cytoplasm. Its function is as follows. RNA-binding component of the eukaryotic translation initiation factor 3 (eIF-3) complex, which is involved in protein synthesis of a specialized repertoire of mRNAs and, together with other initiation factors, stimulates binding of mRNA and methionyl-tRNAi to the 40S ribosome. The eIF-3 complex specifically targets and initiates translation of a subset of mRNAs involved in cell proliferation. This Drosophila sechellia (Fruit fly) protein is Eukaryotic translation initiation factor 3 subunit A.